Here is a 391-residue protein sequence, read N- to C-terminus: AN1-type zinc finger and UBX domain-containing protein DDB_G0268260 (391 aa).

Residues 1-16 (MQQQSPPTAPQQQQQQ) are compositionally biased toward low complexity. Positions 1–20 (MQQQSPPTAPQQQQQQQRER) are disordered. AN1-type zinc fingers lie at residues 26–74 (DHIG…QREN) and 118–166 (APKS…IINS). The Zn(2+) site is built by Cys32, Cys37, Cys47, Cys50, Cys55, His58, His64, Cys66, Cys124, Cys129, Cys139, Cys142, Cys147, His150, His156, and Cys158. Residues 185 to 236 (NINNNINNNKNNNNNNNNNNNNNNNNNNNNNNNNNNNNNNNNNNNNNSNNNN) show a composition bias toward low complexity. The interval 185–240 (NINNNINNNKNNNNNNNNNNNNNNNNNNNNNNNNNNNNNNNNNNNNNSNNNNKLIY) is disordered. Residues 278–356 (SSEEIGEIGI…GLLPVSTLYM (79 aa)) enclose the UBX domain.

The sequence is that of AN1-type zinc finger and UBX domain-containing protein DDB_G0268260 from Dictyostelium discoideum (Social amoeba).